A 442-amino-acid polypeptide reads, in one-letter code: Chromosomal replication initiator protein DnaA (442 aa).

The interval 1 to 84 (MSVLWSHCIS…LEIGSRAAEA (84 aa)) is domain I, interacts with DnaA modulators. Positions 84–105 (AAQMRSANPPRKTAPARKQVPN) are domain II. A domain III, AAA+ region region spans residues 106–322 (NLNSAFIFGN…GALRRVIANA (217 aa)). Residues glycine 150, glycine 152, lysine 153, and threonine 154 each coordinate ATP. The interval 323-442 (QFTGRPITLE…FSNLLRILSN (120 aa)) is domain IV, binds dsDNA.

The protein belongs to the DnaA family. As to quaternary structure, oligomerizes as a right-handed, spiral filament on DNA at oriC.

It localises to the cytoplasm. Functionally, plays an essential role in the initiation and regulation of chromosomal replication. ATP-DnaA binds to the origin of replication (oriC) to initiate formation of the DNA replication initiation complex once per cell cycle. Binds the DnaA box (a 9 base pair repeat at the origin) and separates the double-stranded (ds)DNA. Forms a right-handed helical filament on oriC DNA; dsDNA binds to the exterior of the filament while single-stranded (ss)DNA is stabiized in the filament's interior. The ATP-DnaA-oriC complex binds and stabilizes one strand of the AT-rich DNA unwinding element (DUE), permitting loading of DNA polymerase. After initiation quickly degrades to an ADP-DnaA complex that is not apt for DNA replication. Binds acidic phospholipids. In Methylococcus capsulatus (strain ATCC 33009 / NCIMB 11132 / Bath), this protein is Chromosomal replication initiator protein DnaA.